The sequence spans 357 residues: Aspartate carbamoyltransferase catalytic subunit (357 aa).

Residues 1–15 (MSNSIDSQSLPTVSP) are compositionally biased toward polar residues. Positions 1–21 (MSNSIDSQSLPTVSPTDYARF) are disordered. Carbamoyl phosphate contacts are provided by R97 and T98. K125 contributes to the L-aspartate binding site. Carbamoyl phosphate is bound by residues R147, H177, and Q180. R211 and R266 together coordinate L-aspartate. Positions 307 and 308 each coordinate carbamoyl phosphate.

This sequence belongs to the aspartate/ornithine carbamoyltransferase superfamily. ATCase family. As to quaternary structure, heterododecamer (2C3:3R2) of six catalytic PyrB chains organized as two trimers (C3), and six regulatory PyrI chains organized as three dimers (R2).

It carries out the reaction carbamoyl phosphate + L-aspartate = N-carbamoyl-L-aspartate + phosphate + H(+). It participates in pyrimidine metabolism; UMP biosynthesis via de novo pathway; (S)-dihydroorotate from bicarbonate: step 2/3. Its function is as follows. Catalyzes the condensation of carbamoyl phosphate and aspartate to form carbamoyl aspartate and inorganic phosphate, the committed step in the de novo pyrimidine nucleotide biosynthesis pathway. In Psychrobacter cryohalolentis (strain ATCC BAA-1226 / DSM 17306 / VKM B-2378 / K5), this protein is Aspartate carbamoyltransferase catalytic subunit.